Here is a 422-residue protein sequence, read N- to C-terminus: Inhibitory synaptic factor 2A (422 aa).

The disordered stretch occupies residues 143–163 (FLADSKEKSEAGPMEEPRPCS). Residues 146 to 160 (DSKEKSEAGPMEEPR) are compositionally biased toward basic and acidic residues. Serine 177 is subject to Phosphoserine. The stretch at 344-370 (TEVVDLKAQLQVMENLISSSQETIKVL) forms a coiled coil.

Belongs to the INSYN2 family. Interacts with GPHN.

Its subcellular location is the postsynaptic density. Its function is as follows. Component of the protein machinery at the inhibitory synapses, probably acting as a scaffold. Inhibitory synapses dampen neuronal activity through postsynaptic hyperpolarization. This synaptic inhibition is fundamental for the functioning of the central nervous system, shaping and orchestrating the flow of information through neuronal networks to generate a precise neural code. The polypeptide is Inhibitory synaptic factor 2A (Mus musculus (Mouse)).